The chain runs to 104 residues: MAAIQGIEGVISQLQATAMAARGQDTHSQSTVSFAGQLHAALDRISDRQAAARVQAEKFTLGEPGIALNDVMADMQKASVSMQMGIQVRNKLVAAYQEVMSMQV.

It belongs to the FliE family.

It localises to the bacterial flagellum basal body. The sequence is that of Flagellar hook-basal body complex protein FliE from Salmonella heidelberg (strain SL476).